A 354-amino-acid polypeptide reads, in one-letter code: Protein-glutamate methylesterase/protein-glutamine glutaminase of group 3 operon (354 aa).

Residues 3–121 (RILLATSTVE…MQLEQPAIEK (119 aa)) form the Response regulatory domain. Residues 158–340 (PIGIVGIAAS…LESIAENITA (183 aa)) form the CheB-type methylesterase domain. Active-site residues include Ser167, His194, and Asp287.

Belongs to the CheB family.

The protein localises to the cytoplasm. It carries out the reaction [protein]-L-glutamate 5-O-methyl ester + H2O = L-glutamyl-[protein] + methanol + H(+). It catalyses the reaction L-glutaminyl-[protein] + H2O = L-glutamyl-[protein] + NH4(+). Its function is as follows. Involved in chemotaxis. Part of a chemotaxis signal transduction system that modulates chemotaxis in response to various stimuli. Catalyzes the demethylation of specific methylglutamate residues introduced into the chemoreceptors (methyl-accepting chemotaxis proteins or MCP) by CheR. Also mediates the irreversible deamidation of specific glutamine residues to glutamic acid. In Rhizobium meliloti (strain 1021) (Ensifer meliloti), this protein is Protein-glutamate methylesterase/protein-glutamine glutaminase of group 3 operon.